A 208-amino-acid chain; its full sequence is Inosine triphosphate pyrophosphatase (208 aa).

Alanine 2 is modified (N-acetylalanine). 14–19 (TGNAKK) is a binding site for ITP. Glutamate 44 contacts Mg(2+). ITP is bound by residues lysine 56, 72–73 (DT), lysine 89, 149–152 (FGWD), lysine 172, and 177–178 (HR).

It belongs to the HAM1 NTPase family. As to quaternary structure, homodimer. Mg(2+) is required as a cofactor. Requires Mn(2+) as cofactor.

It localises to the cytoplasm. It catalyses the reaction ITP + H2O = IMP + diphosphate + H(+). The catalysed reaction is dITP + H2O = dIMP + diphosphate + H(+). It carries out the reaction XTP + H2O = XMP + diphosphate + H(+). The enzyme catalyses N(6)-hydroxy-dATP + H2O = N(6)-hydroxy-dAMP + diphosphate + H(+). Pyrophosphatase that hydrolyzes the non-canonical purine nucleotides inosine triphosphate (ITP), deoxyinosine triphosphate (dITP) as well as 2'-deoxy-N-6-hydroxylaminopurine triphosphate (dHAPTP) and xanthosine 5'-triphosphate (XTP) to their respective monophosphate derivatives. The enzyme does not distinguish between the deoxy- and ribose forms. Probably excludes non-canonical purines from RNA and DNA precursor pools, thus preventing their incorporation into RNA and DNA and avoiding chromosomal lesions. The polypeptide is Inosine triphosphate pyrophosphatase (Bos taurus (Bovine)).